Reading from the N-terminus, the 684-residue chain is Cyclic nucleotide-gated channel alpha-1 (684 aa).

Topologically, residues 1-161 (MKTNIINTWH…PSGNTYYNWL (161 aa)) are cytoplasmic. A disordered region spans residues 34–145 (ACSSFSDDDN…TKEKKEEEKK (112 aa)). Acidic residues predominate over residues 39 to 54 (SDDDNGSLSEESENED). The span at 105-145 (SKADDKNENKKDPEKKKKKEKEKEKKKKEEKTKEKKEEEKK) shows a compositional bias: basic and acidic residues. A helical transmembrane segment spans residues 162-183 (FCITLPVMYNWTMIIARACFDE). The Extracellular segment spans residues 184–193 (LQSDYLEYWL). Residues 194-214 (IFDYVSDVVYLADMFVRTRTG) traverse the membrane as a helical segment. Over 215 to 239 (YLEQGLLVKDRMKLIEKYKANLQFK) the chain is Cytoplasmic. A helical transmembrane segment spans residues 240 to 258 (LDVLSVIPTDLLYIKFGWN). The Extracellular portion of the chain corresponds to 259 to 263 (YPEIR). Residues 264–282 (LNRLLRISRMFEFFQRTET) form a helical membrane-spanning segment. At 283 to 289 (RTNYPNI) the chain is on the cytoplasmic side. An ion conduction pathway region spans residues 287–395 (PNIFRISNLV…GNIGSMISNM (109 aa)). Residues 290 to 313 (FRISNLVMYIVIIIHWNACVYYSI) form a helical membrane-spanning segment. Residues 314–336 (SKAIGFGNDTWVYPDVNDPEFGR) are Extracellular-facing. Asn-321 is a glycosylation site (N-linked (GlcNAc...) asparagine). A run of 2 helical transmembrane segments spans residues 337–371 (LARKYVYSLYWSTLTLTTIGETPPPVLDSEYIFVV) and 372–396 (VDFLIGVLIFATIVGNIGSMISNMN). The tract at residues 354 to 357 (TIGE) is selectivity filter. The tract at residues 397–473 (AARAEFQSRV…DTLKKVRIFA (77 aa)) is C-linker. Residues 397-684 (AARAEFQSRV…ESELTESLQD (288 aa)) are Cytoplasmic-facing. The segment at 477–597 (AGLLVELVLK…EEKGRQILMK (121 aa)) is cyclic nucleotide-binding domain. Residues Gly-537, Ser-540, Arg-553, and Thr-554 each coordinate 3',5'-cyclic GMP. 3',5'-cyclic AMP is bound by residues Arg-553 and Thr-554. Positions 615–669 (LEEKVTRMEGSVDLLQTRFARILAEYESMQQKLKQRLTKVEKFLKPLIETEFSAL) form a coiled coil.

The protein belongs to the cyclic nucleotide-gated cation channel (TC 1.A.1.5) family. CNGA1 subfamily. As to quaternary structure, forms heterotetrameric channels composed of CNGA1 and CNGB1 subunits with 3:1 stoichiometry. May also form cyclic nucleotide-activated homotetrameric channels, that are efficiently activated by saturating cGMP, but poorly activated by saturating cAMP compared to the heterotetramer with CNGB1. The channel binds Ca(2+)-bound CALM1 via CaM1 and CaM2 regions of the CNGB1 subunit; this interaction modulates the affinity of the channel for cNMPs in response to intracellular Ca(2+) levels. As to expression, rod cells in the retina and inner medulla of kidney.

It localises to the cell membrane. The enzyme catalyses Ca(2+)(in) = Ca(2+)(out). It carries out the reaction Na(+)(in) = Na(+)(out). It catalyses the reaction K(+)(in) = K(+)(out). The catalysed reaction is NH4(+)(in) = NH4(+)(out). The enzyme catalyses Rb(+)(in) = Rb(+)(out). It carries out the reaction Li(+)(in) = Li(+)(out). It catalyses the reaction Cs(+)(in) = Cs(+)(out). Its function is as follows. Pore-forming subunit of the rod cyclic nucleotide-gated channel. Mediates rod photoresponses at dim light converting transient changes in intracellular cGMP levels into electrical signals. In the dark, cGMP levels are high and keep the channel open enabling a steady inward current carried by Na(+) and Ca(2+) ions that leads to membrane depolarization and neurotransmitter release from synaptic terminals. Upon photon absorption cGMP levels decline leading to channel closure and membrane hyperpolarization that ultimately slows neurotransmitter release and signals the presence of light, the end point of the phototransduction cascade. Conducts cGMP- and cAMP-gated ion currents, with permeability for monovalent and divalent cations. The selectivity for Ca(2+) over Na(+) increases with cGMP concentrations, whereas the selectivity among monovalent ions is independent of the cGMP levels. The chain is Cyclic nucleotide-gated channel alpha-1 (Cnga1) from Mus musculus (Mouse).